The following is a 56-amino-acid chain: Large ribosomal subunit protein bL32 (56 aa).

Positions 1–16 (MAVQKSKKSRSRRDMR) are enriched in basic residues. Residues 1–56 (MAVQKSKKSRSRRDMRRSHDAIDGPTLSVDSTTGETHRRHHVTADGYYKGRKVVNK) form a disordered region.

The protein belongs to the bacterial ribosomal protein bL32 family.

This is Large ribosomal subunit protein bL32 from Idiomarina loihiensis (strain ATCC BAA-735 / DSM 15497 / L2-TR).